The chain runs to 373 residues: Glycerol-3-phosphate dehydrogenase [NAD(+)] 2 (373 aa).

S15 carries the phosphoserine modification. NAD(+)-binding positions include 31-36 (GSGNWG), F123, K146, and A179. K146 lines the substrate pocket. Catalysis depends on K236, which acts as the Proton acceptor. NAD(+)-binding residues include R300 and Q329. Position 300-301 (300-301 (RN)) interacts with substrate.

The protein belongs to the NAD-dependent glycerol-3-phosphate dehydrogenase family.

It localises to the cytoplasm. The catalysed reaction is sn-glycerol 3-phosphate + NAD(+) = dihydroxyacetone phosphate + NADH + H(+). The protein is Glycerol-3-phosphate dehydrogenase [NAD(+)] 2 (gpd2) of Schizosaccharomyces pombe (strain 972 / ATCC 24843) (Fission yeast).